We begin with the raw amino-acid sequence, 71 residues long: uncharacterized protein (71 aa).

A compositionally biased stretch (polar residues) spans 20–32 (SSGRRQLTATQPR). Positions 20 to 46 (SSGRRQLTATQPRSDPESQRGRTSSNR) are disordered.

This is an uncharacterized protein from Rhizobium leguminosarum.